The chain runs to 124 residues: Mediator of RNA polymerase II transcription subunit 31 (124 aa).

The protein belongs to the Mediator complex subunit 31 family. As to quaternary structure, component of the Mediator complex.

The protein resides in the nucleus. Component of the Mediator complex, a coactivator involved in the regulated transcription of nearly all RNA polymerase II-dependent genes. Mediator functions as a bridge to convey information from gene-specific regulatory proteins to the basal RNA polymerase II transcription machinery. Mediator is recruited to promoters by direct interactions with regulatory proteins and serves as a scaffold for the assembly of a functional preinitiation complex with RNA polymerase II and the general transcription factors. The chain is Mediator of RNA polymerase II transcription subunit 31 (SOH1) from Kluyveromyces lactis (strain ATCC 8585 / CBS 2359 / DSM 70799 / NBRC 1267 / NRRL Y-1140 / WM37) (Yeast).